We begin with the raw amino-acid sequence, 639 residues long: MGKIIGIDLGTTNSCVAVLDGGKARVLENAEGDRTTPSIIAYTDDETIVGQPAKRQAVTNPNNTFFAIKRLIGRRFKDDEVQRDVNIMPFKIIAADNGDAWVESRGNKMAPPQVSAEILKKMKKTAEDFLGEEVTEAVITVPAYFNDSQRQATKDAGRIAGLEVKRIINEPTAAALAYGIDKKQGDNIVAVYDLGGGTFDISIIEIDSNDGDQTFEVLATNGDTHLGGEDFDNRLINYLADEFKKEQGLDLRKDPLAMQRLKEAAEKAKIELSSTNQTEVNLPYITADATGPKHLVVKITRAKLESLVEDLIIRTLEPLKVALADADLSVSDINEVILVGGQTRMPKVQEAVSNFFGKEPRKDVNPDEAVAVGAAIQAGVLSGDVKDVLLLDVTPLSLGIETMGSVMTKLIEKNTTIPTKAQQVFSTADDNQSAVTIHVLQGERKQASANKSLGQFNLDGIEPAPRGMPQIEVMFDIDADGILHVSATDKKTGKKQNITIKASSGLSEEEVAQMVRDAEAHAEEDKKFEELVQSRNQADGLVHATKKQVEEAGDALPADDKAKIEAAMSAVEVATKGNDKEAIEKATQELIEASAKLMEIAQAKAQTQGGAQEGAAKQSNATADDVVDAEFEEVKDDKK.

Residue Thr198 is modified to Phosphothreonine; by autocatalysis. The segment covering 603–618 (AKAQTQGGAQEGAAKQ) has biased composition (low complexity). Residues 603-639 (AKAQTQGGAQEGAAKQSNATADDVVDAEFEEVKDDKK) form a disordered region. Residues 625-639 (DVVDAEFEEVKDDKK) are compositionally biased toward acidic residues.

Belongs to the heat shock protein 70 family.

In terms of biological role, acts as a chaperone. This chain is Chaperone protein DnaK, found in Shewanella sp. (strain ANA-3).